The following is a 79-amino-acid chain: Sec-independent protein translocase protein TatA (79 aa).

Residues 1–21 (MGFSTTHLLIFLVIIIVIFGT) traverse the membrane as a helical segment. The disordered stretch occupies residues 43-63 (KEGSDKAADAPAAAPQQVASS). Residues 51–63 (DAPAAAPQQVASS) are compositionally biased toward low complexity.

It belongs to the TatA/E family. In terms of assembly, the Tat system comprises two distinct complexes: a TatABC complex, containing multiple copies of TatA, TatB and TatC subunits, and a separate TatA complex, containing only TatA subunits. Substrates initially bind to the TatABC complex, which probably triggers association of the separate TatA complex to form the active translocon.

The protein resides in the cell inner membrane. Functionally, part of the twin-arginine translocation (Tat) system that transports large folded proteins containing a characteristic twin-arginine motif in their signal peptide across membranes. TatA could form the protein-conducting channel of the Tat system. The protein is Sec-independent protein translocase protein TatA of Albidiferax ferrireducens (strain ATCC BAA-621 / DSM 15236 / T118) (Rhodoferax ferrireducens).